Consider the following 77-residue polypeptide: Secapin (77 aa).

An N-terminal signal peptide occupies residues 1–32 (MKNYSKNATYLITVLLFSFVAMLLIIPSKCEA). Positions 33-52 (VSNDMQPLEARSADLVPEPR) are excised as a propeptide. A disulfide bridge connects residues C61 and C72.

It belongs to the secapin family. In terms of tissue distribution, expressed by the venom gland.

It localises to the secreted. Nontoxic peptide. The polypeptide is Secapin (Vespa magnifica (Hornet)).